Here is a 342-residue protein sequence, read N- to C-terminus: 4-hydroxy-2-oxovalerate aldolase 2 (342 aa).

The Pyruvate carboxyltransferase domain occupies 8 to 260 (ITVHDMTLRD…ETGVDVFKIQ (253 aa)). Residue 16–17 (RD) participates in substrate binding. Residue D17 participates in Mn(2+) binding. Residue H20 is the Proton acceptor of the active site. Substrate-binding residues include S170 and H199. Residues H199 and H201 each coordinate Mn(2+). Residue Y290 coordinates substrate.

This sequence belongs to the 4-hydroxy-2-oxovalerate aldolase family.

The catalysed reaction is (S)-4-hydroxy-2-oxopentanoate = acetaldehyde + pyruvate. In Azoarcus sp. (strain BH72), this protein is 4-hydroxy-2-oxovalerate aldolase 2 (mhpE).